The chain runs to 420 residues: D-tagatose-1,6-bisphosphate aldolase subunit GatZ (420 aa).

It belongs to the GatZ/KbaZ family. GatZ subfamily. In terms of assembly, forms a complex with GatY.

It functions in the pathway carbohydrate metabolism; D-tagatose 6-phosphate degradation; D-glyceraldehyde 3-phosphate and glycerone phosphate from D-tagatose 6-phosphate: step 2/2. Functionally, component of the tagatose-1,6-bisphosphate aldolase GatYZ that is required for full activity and stability of the Y subunit. Could have a chaperone-like function for the proper and stable folding of GatY. When expressed alone, GatZ does not show any aldolase activity. Is involved in the catabolism of galactitol. The polypeptide is D-tagatose-1,6-bisphosphate aldolase subunit GatZ (Escherichia coli O17:K52:H18 (strain UMN026 / ExPEC)).